The primary structure comprises 127 residues: uncharacterized protein (127 aa).

A Phosphothreonine modification is found at T30. The tract at residues 51–75 is disordered; that stretch reads APTYEQVLYPPASQKKTSNSTSEES. A Phosphoserine modification is found at S63.

This is an uncharacterized protein from Mus musculus (Mouse).